We begin with the raw amino-acid sequence, 964 residues long: Glycine dehydrogenase (decarboxylating) (964 aa).

Polar residues predominate over residues 1–10 (MNSTLQNRNR). Residues 1-25 (MNSTLQNRNRTNLERVSTDPLDTFP) form a disordered region. The residue at position 713 (lysine 713) is an N6-(pyridoxal phosphate)lysine.

Belongs to the GcvP family. In terms of assembly, the glycine cleavage system is composed of four proteins: P, T, L and H. It depends on pyridoxal 5'-phosphate as a cofactor.

It catalyses the reaction N(6)-[(R)-lipoyl]-L-lysyl-[glycine-cleavage complex H protein] + glycine + H(+) = N(6)-[(R)-S(8)-aminomethyldihydrolipoyl]-L-lysyl-[glycine-cleavage complex H protein] + CO2. Functionally, the glycine cleavage system catalyzes the degradation of glycine. The P protein binds the alpha-amino group of glycine through its pyridoxal phosphate cofactor; CO(2) is released and the remaining methylamine moiety is then transferred to the lipoamide cofactor of the H protein. The polypeptide is Glycine dehydrogenase (decarboxylating) (Leptospira borgpetersenii serovar Hardjo-bovis (strain JB197)).